We begin with the raw amino-acid sequence, 465 residues long: 5'-adenylylsulfate reductase 1, chloroplastic (465 aa).

The N-terminal 53 residues, 1–53 (MAMSVNVSSSSSSGIINSRFGVSLEPKVSQIGSLRLLDRVHVAPVSLNLSGKR), are a transit peptide targeting the chloroplast. The segment at 73–327 (LAATMVAEIA…KAKECGLHKG (255 aa)) is reductase domain. The 122-residue stretch at 344–465 (SAVADIFKSE…SLTSFLNLVR (122 aa)) folds into the Thioredoxin domain. Catalysis depends on nucleophile residues Cys-385 and Cys-388. An intrachain disulfide couples Cys-385 to Cys-388.

The protein belongs to the APS reductase family. Requires [4Fe-4S] cluster as cofactor. As to expression, leaves, roots and stem.

It is found in the plastid. Its subcellular location is the chloroplast. The catalysed reaction is glutathione disulfide + sulfite + AMP + 2 H(+) = adenosine 5'-phosphosulfate + 2 glutathione. With respect to regulation, stimulated by sodium sulfate &gt; ammonium sulfate and is sensitive to inactivation by 5'AMP. Its function is as follows. Reduces sulfate for Cys biosynthesis. Substrate preference is adenosine-5'-phosphosulfate (APS) &gt;&gt; 3'-phosphoadenosine-5'-phosphosulfate (PAPS). Uses glutathione or DTT as source of protons. The polypeptide is 5'-adenylylsulfate reductase 1, chloroplastic (APR1) (Arabidopsis thaliana (Mouse-ear cress)).